We begin with the raw amino-acid sequence, 259 residues long: tRNA (guanine-N(7)-)-methyltransferase (259 aa).

S-adenosyl-L-methionine-binding positions include Gly80, 103–104, 136–137, and Leu156; these read EL and NS. Asp159 is an active-site residue. 234–236 contacts S-adenosyl-L-methionine; sequence TEE.

The protein belongs to the class I-like SAM-binding methyltransferase superfamily. TrmB family.

It localises to the nucleus. It catalyses the reaction guanosine(46) in tRNA + S-adenosyl-L-methionine = N(7)-methylguanosine(46) in tRNA + S-adenosyl-L-homocysteine. It participates in tRNA modification; N(7)-methylguanine-tRNA biosynthesis. In terms of biological role, catalyzes the formation of N(7)-methylguanine at position 46 (m7G46) in tRNA. This chain is tRNA (guanine-N(7)-)-methyltransferase, found in Oryza sativa subsp. indica (Rice).